Reading from the N-terminus, the 165-residue chain is Small ribosomal subunit protein uS5 (165 aa).

In terms of domain architecture, S5 DRBM spans 10–73 (LKEKVVSISR…EDAKKNLVEV (64 aa)).

Belongs to the universal ribosomal protein uS5 family. In terms of assembly, part of the 30S ribosomal subunit. Contacts proteins S4 and S8.

Its function is as follows. With S4 and S12 plays an important role in translational accuracy. Located at the back of the 30S subunit body where it stabilizes the conformation of the head with respect to the body. This Clostridium perfringens (strain ATCC 13124 / DSM 756 / JCM 1290 / NCIMB 6125 / NCTC 8237 / Type A) protein is Small ribosomal subunit protein uS5.